The following is a 262-amino-acid chain: DNA-directed RNA polymerase subunit Rpo3 (262 aa).

Belongs to the archaeal Rpo3/eukaryotic RPB3 RNA polymerase subunit family. In terms of assembly, part of the RNA polymerase complex.

The protein resides in the cytoplasm. The catalysed reaction is RNA(n) + a ribonucleoside 5'-triphosphate = RNA(n+1) + diphosphate. Functionally, DNA-dependent RNA polymerase (RNAP) catalyzes the transcription of DNA into RNA using the four ribonucleoside triphosphates as substrates. This is DNA-directed RNA polymerase subunit Rpo3 from Pyrobaculum neutrophilum (strain DSM 2338 / JCM 9278 / NBRC 100436 / V24Sta) (Thermoproteus neutrophilus).